The following is a 405-amino-acid chain: 8-amino-7-oxononanoate synthase (405 aa).

Residue Arg23 participates in substrate binding. Residue Gly114 to Tyr115 participates in pyridoxal 5'-phosphate binding. His139 contributes to the substrate binding site. 3 residues coordinate pyridoxal 5'-phosphate: Ser185, His213, and Thr245. Lys248 is modified (N6-(pyridoxal phosphate)lysine). Substrate is bound at residue Thr366.

It belongs to the class-II pyridoxal-phosphate-dependent aminotransferase family. BioF subfamily. Homodimer. It depends on pyridoxal 5'-phosphate as a cofactor.

The enzyme catalyses 6-carboxyhexanoyl-[ACP] + L-alanine + H(+) = (8S)-8-amino-7-oxononanoate + holo-[ACP] + CO2. It functions in the pathway cofactor biosynthesis; biotin biosynthesis. Functionally, catalyzes the decarboxylative condensation of pimeloyl-[acyl-carrier protein] and L-alanine to produce 8-amino-7-oxononanoate (AON), [acyl-carrier protein], and carbon dioxide. In Delftia acidovorans (strain DSM 14801 / SPH-1), this protein is 8-amino-7-oxononanoate synthase.